We begin with the raw amino-acid sequence, 423 residues long: uncharacterized protein (423 aa).

This is an uncharacterized protein from Rhizobium meliloti (strain 1021) (Ensifer meliloti).